The following is a 228-amino-acid chain: U1 small nuclear ribonucleoprotein C (228 aa).

Residues 4–36 (YYCEYCDIYLTHSSPVGRRQHVQGRKHISAKIE) form a Matrin-type zinc finger. The segment covering 179-190 (LVKDNPNEERNG) has biased composition (basic and acidic residues). The interval 179–228 (LVKDNPNEERNGDSAIANQPSTMHHEEDQDDPANATGGTANNNDNVSINA) is disordered. The span at 211-221 (ANATGGTANNN) shows a compositional bias: low complexity.

It belongs to the U1 small nuclear ribonucleoprotein C family. As to quaternary structure, U1 snRNP is composed of the 7 core Sm proteins B/B', D1, D2, D3, E, F and G that assemble in a heptameric protein ring on the Sm site of the small nuclear RNA to form the core snRNP, and at least 3 U1 snRNP-specific proteins U1-70K, U1-A and U1-C. U1-C interacts with U1 snRNA and the 5' splice-site region of the pre-mRNA.

The protein resides in the nucleus. Component of the spliceosomal U1 snRNP, which is essential for recognition of the pre-mRNA 5' splice-site and the subsequent assembly of the spliceosome. U1-C is directly involved in initial 5' splice-site recognition for both constitutive and regulated alternative splicing. The interaction with the 5' splice-site seems to precede base-pairing between the pre-mRNA and the U1 snRNA. Stimulates commitment or early (E) complex formation by stabilizing the base pairing of the 5' end of the U1 snRNA and the 5' splice-site region. The protein is U1 small nuclear ribonucleoprotein C of Plasmodium knowlesi (strain H).